The primary structure comprises 453 residues: tRNA modification GTPase MnmE (453 aa).

(6S)-5-formyl-5,6,7,8-tetrahydrofolate contacts are provided by Arg-22, Glu-79, and Lys-119. In terms of domain architecture, TrmE-type G spans 215-376 (GMKVVIAGRP…LKQHLKSLMG (162 aa)). Asn-225 is a K(+) binding site. GTP contacts are provided by residues 225-230 (NAGKSS), 244-250 (TEIAGTT), 269-272 (DTAG), and 334-337 (NKAD). Mg(2+) is bound at residue Ser-229. K(+) contacts are provided by Thr-244, Ile-246, and Thr-249. Thr-250 serves as a coordination point for Mg(2+). Lys-453 provides a ligand contact to (6S)-5-formyl-5,6,7,8-tetrahydrofolate.

Belongs to the TRAFAC class TrmE-Era-EngA-EngB-Septin-like GTPase superfamily. TrmE GTPase family. In terms of assembly, homodimer. Heterotetramer of two MnmE and two MnmG subunits. K(+) serves as cofactor.

Its subcellular location is the cytoplasm. In terms of biological role, exhibits a very high intrinsic GTPase hydrolysis rate. Involved in the addition of a carboxymethylaminomethyl (cmnm) group at the wobble position (U34) of certain tRNAs, forming tRNA-cmnm(5)s(2)U34. The chain is tRNA modification GTPase MnmE from Shewanella baltica (strain OS155 / ATCC BAA-1091).